Consider the following 265-residue polypeptide: MDTVLDPFTGLDSFSSSYFDDDDFFTDHSSRDHLDTDDFLDEDVDFLTNQIQEYYKDSRISQDGDYCDVGNFSFSSSSSTFSYGCADSTSELSPHRDGGLLKRRRRMRSEVEMQQLRQAANVRERRRMQSINDAFEGLRSHIPTLPYEKRLSKVDTLRLAIGYINFLAELVQSDMPIRNPHSDALNQPKKVIICHRGTRSPSPNDPDYGLPPLAGHSLSWTDEKQLKDQNIIRTAKVWTPEDPRKLHLKSSINNIENEPPFNFIS.

The bHLH domain maps to 115-167; the sequence is QLRQAANVRERRRMQSINDAFEGLRSHIPTLPYEKRLSKVDTLRLAIGYINFL.

The protein resides in the nucleus. Transcription factor implicated in the cell fate determination in various organs. Binds to the E-box consensus sequence 5'-CANNTG-3'. Required for exocrine pancreatic development. Plays a central role in directing the differentiation of retinal progenitors towards horizontal and amacrine fates. The protein is Pancreas transcription factor 1 subunit alpha (ptf1a) of Danio rerio (Zebrafish).